We begin with the raw amino-acid sequence, 274 residues long: Large ribosomal subunit protein uL2 (274 aa).

Residues 224 to 274 are disordered; sequence VAMNPVDHPHGGGEGRTSGGRHPVTPWGIPTKGYKTRRNKRSNKLIVQKRK. Over residues 257-274 the composition is skewed to basic residues; sequence YKTRRNKRSNKLIVQKRK.

This sequence belongs to the universal ribosomal protein uL2 family. Part of the 50S ribosomal subunit. Forms a bridge to the 30S subunit in the 70S ribosome.

Its function is as follows. One of the primary rRNA binding proteins. Required for association of the 30S and 50S subunits to form the 70S ribosome, for tRNA binding and peptide bond formation. It has been suggested to have peptidyltransferase activity; this is somewhat controversial. Makes several contacts with the 16S rRNA in the 70S ribosome. In Francisella tularensis subsp. mediasiatica (strain FSC147), this protein is Large ribosomal subunit protein uL2.